A 338-amino-acid chain; its full sequence is Ketol-acid reductoisomerase (NADP(+)) (338 aa).

The KARI N-terminal Rossmann domain maps to Met1 to Thr181. NADP(+) contacts are provided by residues Tyr24–Gln27, Arg47, and Ser52. His107 is a catalytic residue. Gly133 contributes to the NADP(+) binding site. The KARI C-terminal knotted domain maps to Asn182–Ile327. Mg(2+)-binding residues include Asp190, Glu194, Glu226, and Glu230. Ser251 is a binding site for substrate.

Belongs to the ketol-acid reductoisomerase family. Requires Mg(2+) as cofactor.

It carries out the reaction (2R)-2,3-dihydroxy-3-methylbutanoate + NADP(+) = (2S)-2-acetolactate + NADPH + H(+). The enzyme catalyses (2R,3R)-2,3-dihydroxy-3-methylpentanoate + NADP(+) = (S)-2-ethyl-2-hydroxy-3-oxobutanoate + NADPH + H(+). Its pathway is amino-acid biosynthesis; L-isoleucine biosynthesis; L-isoleucine from 2-oxobutanoate: step 2/4. The protein operates within amino-acid biosynthesis; L-valine biosynthesis; L-valine from pyruvate: step 2/4. In terms of biological role, involved in the biosynthesis of branched-chain amino acids (BCAA). Catalyzes an alkyl-migration followed by a ketol-acid reduction of (S)-2-acetolactate (S2AL) to yield (R)-2,3-dihydroxy-isovalerate. In the isomerase reaction, S2AL is rearranged via a Mg-dependent methyl migration to produce 3-hydroxy-3-methyl-2-ketobutyrate (HMKB). In the reductase reaction, this 2-ketoacid undergoes a metal-dependent reduction by NADPH to yield (R)-2,3-dihydroxy-isovalerate. This is Ketol-acid reductoisomerase (NADP(+)) from Polynucleobacter asymbioticus (strain DSM 18221 / CIP 109841 / QLW-P1DMWA-1) (Polynucleobacter necessarius subsp. asymbioticus).